The sequence spans 426 residues: Cytochrome c biogenesis protein CcsB (426 aa).

3 helical membrane-spanning segments follow: residues 14 to 34, 72 to 92, and 162 to 182; these read LKIA…GTLI, SFWF…CSFR, and LGPI…TYGS.

Belongs to the Ccs1/CcsB family. As to quaternary structure, may interact with CcsA.

The protein resides in the cellular thylakoid membrane. Its function is as follows. Required during biogenesis of c-type cytochromes (cytochrome c6 and cytochrome f) at the step of heme attachment. In Prochlorococcus marinus (strain NATL1A), this protein is Cytochrome c biogenesis protein CcsB.